The following is a 200-amino-acid chain: Small ribosomal subunit protein uS4 (200 aa).

The disordered stretch occupies residues Thr22–Lys43. In terms of domain architecture, S4 RNA-binding spans Gln92 to Glu170.

It belongs to the universal ribosomal protein uS4 family. Part of the 30S ribosomal subunit. Contacts protein S5. The interaction surface between S4 and S5 is involved in control of translational fidelity.

In terms of biological role, one of the primary rRNA binding proteins, it binds directly to 16S rRNA where it nucleates assembly of the body of the 30S subunit. Its function is as follows. With S5 and S12 plays an important role in translational accuracy. The chain is Small ribosomal subunit protein uS4 from Listeria welshimeri serovar 6b (strain ATCC 35897 / DSM 20650 / CCUG 15529 / CIP 8149 / NCTC 11857 / SLCC 5334 / V8).